A 339-amino-acid polypeptide reads, in one-letter code: AB hydrolase superfamily protein B1A11.02 (339 aa).

Belongs to the AB hydrolase superfamily.

The chain is AB hydrolase superfamily protein B1A11.02 from Schizosaccharomyces pombe (strain 972 / ATCC 24843) (Fission yeast).